The chain runs to 271 residues: MDVIATTTTIVSDLDSRQPEIEAPIRIQPAKPISFSNGKRCHHHHLASEAVAVATYKECLKNHAAGIGGHALDGCGEFMPSPSFNSNDPASLTCAACGCHRNFHRREEDPSSLSAIVPAIEFRPHNRHQLPPPPPPHLAGIRSPDDDDSASPPPISSSYMLLALSGGRGGANTAVPMSRKRFRTKFSQYQKEKMFEFSERVGWRMPKADDVVVKEFCREIGVDKSVFKVWMHNNKISGRSGARRANGGVVVGGVGDSRQSVVPTNGSFSST.

S16 is modified (phosphoserine). A ZF-HD dimerization-type; degenerate zinc finger spans residues Y56–E107. The tract at residues H125–P154 is disordered. Positions R179–A242 form a DNA-binding region, homeobox.

As to quaternary structure, homo- and heterodimer with other ZFHD proteins. Interacts with MIF1, MIF2 and MIF3; these interactions prevent nuclear localization and DNA-binding to inhibit transcription regulation activity. Binds to ZHD1, ZHD2, ZHD4, ZHD10 and ZHD11. Interacts with HIPP30. Mostly expressed in flowers and inflorescence.

It localises to the nucleus. In terms of biological role, putative transcription factor. This chain is Zinc-finger homeodomain protein 8 (ZHD8), found in Arabidopsis thaliana (Mouse-ear cress).